A 345-amino-acid polypeptide reads, in one-letter code: Uroporphyrinogen decarboxylase (345 aa).

Substrate is bound by residues 28-32 (RQAGR), Asp-77, Tyr-152, Ser-207, and His-321.

This sequence belongs to the uroporphyrinogen decarboxylase family. Homodimer.

Its subcellular location is the cytoplasm. The enzyme catalyses uroporphyrinogen III + 4 H(+) = coproporphyrinogen III + 4 CO2. It functions in the pathway porphyrin-containing compound metabolism; protoporphyrin-IX biosynthesis; coproporphyrinogen-III from 5-aminolevulinate: step 4/4. Catalyzes the decarboxylation of four acetate groups of uroporphyrinogen-III to yield coproporphyrinogen-III. In Arthrobacter sp. (strain FB24), this protein is Uroporphyrinogen decarboxylase.